Consider the following 735-residue polypeptide: Ribosomal protein S6 kinase alpha-1 (735 aa).

Residue Ser-54 is modified to Phosphoserine. In terms of domain architecture, Protein kinase 1 spans 62–321; that stretch reads FELLKVLGQG…AEEIKRHIFY (260 aa). Residues 68–76 and Lys-94 contribute to the ATP site; that span reads LGQGSFGKV. Asp-187 serves as the catalytic Proton acceptor. Ser-221 carries the phosphoserine; by PDPK1 modification. Phosphoserine is present on Ser-307. The 70-residue stretch at 322–391 folds into the AGC-kinase C-terminal domain; the sequence is STIDWNKLYR…VATGLMEDDS (70 aa). Phosphothreonine is present on Thr-359. At Ser-363 the chain carries Phosphoserine. Residues Ser-369 and Ser-380 each carry the phosphoserine; by autocatalysis modification. Positions 418–675 constitute a Protein kinase 2 domain; that stretch reads YIVKETIGVG…AKQVLQHPWI (258 aa). ATP is bound by residues 424 to 432 and Lys-447; that span reads IGVGSYSVC. Asp-535 serves as the catalytic Proton acceptor. Thr-573 bears the Phosphothreonine mark. Ser-732 is modified (phosphoserine).

It belongs to the protein kinase superfamily. AGC Ser/Thr protein kinase family. S6 kinase subfamily. As to quaternary structure, forms a complex with either MAPK1/ERK2 or MAPK3/ERK1 in quiescent cells. Transiently dissociates following mitogenic stimulation. Interacts with ETV1/ER81 and FGFR1. The cofactor is Mg(2+). Post-translationally, activated by phosphorylation at Ser-221 by PDPK1. Autophosphorylated on Ser-380, as part of the activation process. May be phosphorylated at Thr-359 and Ser-363 by MAPK1/ERK2 and MAPK3/ERK1. In terms of processing, N-terminal myristoylation results in an activated kinase in the absence of added growth factors.

The protein resides in the nucleus. Its subcellular location is the cytoplasm. It catalyses the reaction L-seryl-[protein] + ATP = O-phospho-L-seryl-[protein] + ADP + H(+). The enzyme catalyses L-threonyl-[protein] + ATP = O-phospho-L-threonyl-[protein] + ADP + H(+). With respect to regulation, upon extracellular signal or mitogen stimulation, phosphorylated at Thr-573 in the C-terminal kinase domain (CTKD) by MAPK1/ERK2 and MAPK3/ERK1. The activated CTKD then autophosphorylates Ser-380, allowing binding of PDPK1, which in turn phosphorylates Ser-221 in the N-terminal kinase domain (NTDK) leading to the full activation of the protein and subsequent phosphorylation of the substrates by the NTKD. In terms of biological role, serine/threonine-protein kinase that acts downstream of ERK (MAPK1/ERK2 and MAPK3/ERK1) signaling and mediates mitogenic and stress-induced activation of the transcription factors CREB1, ETV1/ER81 and NR4A1/NUR77, regulates translation through RPS6 and EIF4B phosphorylation, and mediates cellular proliferation, survival, and differentiation by modulating mTOR signaling and repressing pro-apoptotic function of BAD and DAPK1. In fibroblast, is required for EGF-stimulated phosphorylation of CREB1, which results in the subsequent transcriptional activation of several immediate-early genes. In response to mitogenic stimulation (EGF and PMA), phosphorylates and activates NR4A1/NUR77 and ETV1/ER81 transcription factors and the cofactor CREBBP. Upon insulin-derived signal, acts indirectly on the transcription regulation of several genes by phosphorylating GSK3B at 'Ser-9' and inhibiting its activity. Phosphorylates RPS6 in response to serum or EGF via an mTOR-independent mechanism and promotes translation initiation by facilitating assembly of the pre-initiation complex. In response to insulin, phosphorylates EIF4B, enhancing EIF4B affinity for the EIF3 complex and stimulating cap-dependent translation. Is involved in the mTOR nutrient-sensing pathway by directly phosphorylating TSC2 at 'Ser-1798', which potently inhibits TSC2 ability to suppress mTOR signaling, and mediates phosphorylation of RPTOR, which regulates mTORC1 activity and may promote rapamycin-sensitive signaling independently of the PI3K/AKT pathway. Also involved in feedback regulation of mTORC1 and mTORC2 by phosphorylating DEPTOR. Mediates cell survival by phosphorylating the pro-apoptotic proteins BAD and DAPK1 and suppressing their pro-apoptotic function. Promotes the survival of hepatic stellate cells by phosphorylating CEBPB in response to the hepatotoxin carbon tetrachloride (CCl4). Mediates induction of hepatocyte prolifration by TGFA through phosphorylation of CEBPB. Is involved in cell cycle regulation by phosphorylating the CDK inhibitor CDKN1B, which promotes CDKN1B association with 14-3-3 proteins and prevents its translocation to the nucleus and inhibition of G1 progression. Phosphorylates EPHA2 at 'Ser-897', the RPS6KA-EPHA2 signaling pathway controls cell migration. In response to mTORC1 activation, phosphorylates EIF4B at 'Ser-406' and 'Ser-422' which stimulates bicarbonate cotransporter SLC4A7 mRNA translation, increasing SLC4A7 protein abundance and function. In Rattus norvegicus (Rat), this protein is Ribosomal protein S6 kinase alpha-1 (Rps6ka1).